The sequence spans 86 residues: Toxin CngtIV (86 aa).

The N-terminal stretch at 1 to 19 (MNSLLIITACLVLIGTVWA) is a signal peptide. Residues 20–84 (KDGYLVDVKG…TWPLPNKRCG (65 aa)) form the LCN-type CS-alpha/beta domain. 4 cysteine pairs are disulfide-bonded: Cys-30–Cys-83, Cys-34–Cys-59, Cys-43–Cys-64, and Cys-47–Cys-66.

This sequence belongs to the long (4 C-C) scorpion toxin superfamily. Sodium channel inhibitor family. Beta subfamily. In terms of tissue distribution, expressed by the venom gland.

The protein resides in the secreted. In terms of biological role, beta toxins bind voltage-independently at site-4 of sodium channels (Nav) and shift the voltage of activation toward more negative potentials thereby affecting sodium channel activation and promoting spontaneous and repetitive firing. The sequence is that of Toxin CngtIV from Centruroides noxius (Mexican scorpion).